The primary structure comprises 421 residues: Alpha-1-antiproteinase 2 (421 aa).

A signal peptide spans methionine 1–alanine 24. 3 N-linked (GlcNAc...) asparagine glycosylation sites follow: asparagine 73, asparagine 110, and asparagine 274. Residues glycine 376–arginine 395 form an RCL region.

The protein belongs to the serpin family. Post-translationally, N-glycosylated with carbohydrates having biantennary side chains. Plasma.

It localises to the secreted. In terms of biological role, inhibitor of serine proteases. In Equus caballus (Horse), this protein is Alpha-1-antiproteinase 2.